A 785-amino-acid chain; its full sequence is Tripartite terminase subunit 1 (785 aa).

Residues 197–225 (CAVCFEELCVTANQGATIARRLADRICNH) form a C3H1-type zinc finger. Disordered stretches follow at residues 433–452 (GGAADAPKGGAGPDDDGDRV) and 457–489 (GARGLGAPGGGGEDEDRRRGPGGQGPETWGDIA). An ATP-binding site is contributed by 696 to 703 (FASVYRCG).

The protein belongs to the herpesviridae TRM1 protein family. Associates with TRM2 and TRM3 to form the tripartite terminase complex. Interacts with portal protein.

It is found in the host nucleus. Its function is as follows. Component of the molecular motor that translocates viral genomic DNA in empty capsid during DNA packaging. Forms a tripartite terminase complex together with TRM2 and TRM3 in the host cytoplasm. Once the complex reaches the host nucleus, it interacts with the capsid portal vertex. This portal forms a ring in which genomic DNA is translocated into the capsid. TRM1 carries an endonuclease activity that plays an important role for the cleavage of concatemeric viral DNA into unit length genomes. This Human herpesvirus 1 (strain 17) (HHV-1) protein is Tripartite terminase subunit 1.